The following is a 382-amino-acid chain: Galactose-1-phosphate uridylyltransferase (382 aa).

Zn(2+) is bound by residues C52 and C55. UDP-alpha-D-glucose-binding positions include A61 and 77-78 (ND). Zn(2+) is bound at residue H121. Residue N185 coordinates UDP-alpha-D-glucose. H196 contributes to the Zn(2+) binding site. H198 serves as the catalytic Tele-UMP-histidine intermediate. Q200 is a binding site for UDP-alpha-D-glucose. Residues E214, H313, H330, and H332 each coordinate Fe cation. UDP-alpha-D-glucose-binding positions include 345–348 (KFLV) and 350–351 (FE).

Belongs to the galactose-1-phosphate uridylyltransferase type 1 family. As to quaternary structure, homodimer. The cofactor is Zn(2+).

The catalysed reaction is alpha-D-galactose 1-phosphate + UDP-alpha-D-glucose = alpha-D-glucose 1-phosphate + UDP-alpha-D-galactose. The protein operates within carbohydrate metabolism; galactose metabolism. In terms of biological role, essential for growth on galactose but not for cellulase induction. In Hypocrea jecorina (Trichoderma reesei), this protein is Galactose-1-phosphate uridylyltransferase (gal7).